Consider the following 196-residue polypeptide: Recombination protein RecR (196 aa).

Residues 56–71 (CPVCGGLDSQQPCMIC) form a C4-type zinc finger. A Toprim domain is found at 78-172 (PLICVVETVA…SVTRLAQGVP (95 aa)).

The protein belongs to the RecR family.

May play a role in DNA repair. It seems to be involved in an RecBC-independent recombinational process of DNA repair. It may act with RecF and RecO. The chain is Recombination protein RecR from Acidiphilium cryptum (strain JF-5).